The chain runs to 282 residues: Snake venom serine protease NaSP (282 aa).

Residues 1–18 (MVLIRVLASLLILQLSYS) form the signal peptide. Residues 19-56 (KSLDDGAKESAYDDEIQQSSWGNSTVNTTLTETVVIQL) constitute a propeptide that is removed on maturation. Residues N41 and N45 are each glycosylated (N-linked (GlcNAc...) asparagine). Residues 57-280 (IMGGSECYKS…YIDWIRGIIA (224 aa)) form the Peptidase S1 domain. Intrachain disulfides connect C63/C195, C82/C98, C174/C241, C206/C220, and C231/C256. Catalysis depends on H97, which acts as the Charge relay system. A glycan (N-linked (GlcNAc...) asparagine) is linked at N135. D142 functions as the Charge relay system in the catalytic mechanism. N-linked (GlcNAc...) asparagine glycans are attached at residues N149 and N153. Residue S235 is the Charge relay system of the active site.

The protein belongs to the peptidase S1 family. Snake venom subfamily. As to quaternary structure, monomer. Expressed by the venom gland.

The protein localises to the secreted. Snake venom serine protease that may act in the hemostasis system of the prey. The sequence is that of Snake venom serine protease NaSP from Naja atra (Chinese cobra).